Here is a 561-residue protein sequence, read N- to C-terminus: Bifunctional NAD(P)H-hydrate repair enzyme (561 aa).

Positions 1 to 241 (MLSRISERCT…WMIAAERMDA (241 aa)) are NAD(P)H-hydrate epimerase. The 207-residue stretch at 29-235 (LRDAEPAAAA…SLGLEEWMIA (207 aa)) folds into the YjeF N-terminal domain. The NADPHX 1; for epimerase activity stretch occupies residues 77-81 (NNGGD). The K(+) site is built by Asn-78 and Asp-145. The NADPHX 1; for epimerase activity stretch occupies residues 149–155 (GTGISGP). The (6S)-NADPHX site is built by Tyr-160 and Asp-178. Ser-181 serves as a coordination point for K(+). Residues 249–548 (LGDVYGYFST…PRIPFIVNAS (300 aa)) enclose the YjeF C-terminal domain. The interval 249 to 561 (LGDVYGYFST…SATQQRPSGL (313 aa)) is ADP-dependent (S)-NAD(P)H-hydrate dehydratase. Gly-351 provides a ligand contact to (6S)-NADPHX. The interval 417–423 (HPGEAAR) is NADPHX 2; for dehydratase activity. Residues 454–458 (KGPGT) and 475–484 (NAGMASGGMG) contribute to the ADP site. Asp-485 is a binding site for (6S)-NADPHX.

The protein in the N-terminal section; belongs to the NnrE/AIBP family. In the C-terminal section; belongs to the NnrD/CARKD family. K(+) serves as cofactor.

The catalysed reaction is (6S)-NADHX + ADP = AMP + phosphate + NADH + H(+). It carries out the reaction (6S)-NADPHX + ADP = AMP + phosphate + NADPH + H(+). It catalyses the reaction (6R)-NADHX = (6S)-NADHX. The enzyme catalyses (6R)-NADPHX = (6S)-NADPHX. In terms of biological role, bifunctional enzyme that catalyzes the epimerization of the S- and R-forms of NAD(P)HX and the dehydration of the S-form of NAD(P)HX at the expense of ADP, which is converted to AMP. This allows the repair of both epimers of NAD(P)HX, a damaged form of NAD(P)H that is a result of enzymatic or heat-dependent hydration. The sequence is that of Bifunctional NAD(P)H-hydrate repair enzyme from Leishmania braziliensis.